The following is a 226-amino-acid chain: Large ribosomal subunit protein uL1 (226 aa).

This sequence belongs to the universal ribosomal protein uL1 family. Part of the 50S ribosomal subunit.

Its function is as follows. Binds directly to 23S rRNA. The L1 stalk is quite mobile in the ribosome, and is involved in E site tRNA release. Protein L1 is also a translational repressor protein, it controls the translation of the L11 operon by binding to its mRNA. This is Large ribosomal subunit protein uL1 from Treponema denticola (strain ATCC 35405 / DSM 14222 / CIP 103919 / JCM 8153 / KCTC 15104).